Consider the following 493-residue polypeptide: Ribonuclease Y (493 aa).

The helical transmembrane segment at 19–39 threads the bilayer; that stretch reads IFAILFLIIVILNLGLLVFLA. One can recognise a KH domain in the interval 172-241; it reads SASFTVIESD…LTIRNILIND (70 aa). Residues 300-392 enclose the HD domain; that stretch reads VLSHCLETGF…TQIGDKLSAG (93 aa).

Belongs to the RNase Y family.

The protein resides in the cell membrane. Its function is as follows. Endoribonuclease that initiates mRNA decay. This chain is Ribonuclease Y, found in Mycoplasma pneumoniae (strain ATCC 29342 / M129 / Subtype 1) (Mycoplasmoides pneumoniae).